Here is a 236-residue protein sequence, read N- to C-terminus: Diaminopimelate epimerase (236 aa).

Substrate contacts are provided by Asn-8 and Asn-55. The Proton donor role is filled by Cys-64. Substrate-binding positions include Gly-65 to Asn-66, Asn-159, and Glu-176 to Arg-177. Residue Cys-186 is the Proton acceptor of the active site. Gly-187–Thr-188 contributes to the substrate binding site.

Belongs to the diaminopimelate epimerase family. In terms of assembly, probably forms homotrimers.

The protein resides in the cytoplasm. It catalyses the reaction (2S,6S)-2,6-diaminopimelate = meso-2,6-diaminopimelate. It functions in the pathway amino-acid biosynthesis; L-lysine biosynthesis via DAP pathway; DL-2,6-diaminopimelate from LL-2,6-diaminopimelate: step 1/1. Catalyzes the stereoinversion of LL-2,6-diaminopimelate (L,L-DAP) to meso-diaminopimelate (meso-DAP), a precursor of L-lysine and an essential component of the bacterial peptidoglycan. Also catalyzes the racemization of certain amino acids, including Lys, with low efficiency. The chain is Diaminopimelate epimerase from Thermotoga maritima (strain ATCC 43589 / DSM 3109 / JCM 10099 / NBRC 100826 / MSB8).